Consider the following 351-residue polypeptide: Translation initiation factor eIF2B subunit beta (351 aa).

It belongs to the eIF-2B alpha/beta/delta subunits family. As to quaternary structure, component of the translation initiation factor 2B (eIF2B) complex which is a heterodecamer of two sets of five different subunits: alpha, beta, gamma, delta and epsilon. Subunits alpha, beta and delta comprise a regulatory subcomplex and subunits epsilon and gamma comprise a catalytic subcomplex. Within the complex, the hexameric regulatory complex resides at the center, with the two heterodimeric catalytic subcomplexes bound on opposite sides.

The protein resides in the cytoplasm. It is found in the cytosol. Activated by the chemical integrated stress response (ISR) inhibitor ISRIB which stimulates guanine nucleotide exchange factor activity for both phosphorylated and unphosphorylated eIF2. Functionally, acts as a component of the translation initiation factor 2B (eIF2B) complex, which catalyzes the exchange of GDP for GTP on eukaryotic initiation factor 2 (eIF2) gamma subunit. Its guanine nucleotide exchange factor activity is repressed when bound to eIF2 complex phosphorylated on the alpha subunit, thereby limiting the amount of methionyl-initiator methionine tRNA available to the ribosome and consequently global translation is repressed. This Mus musculus (Mouse) protein is Translation initiation factor eIF2B subunit beta (Eif2b2).